A 258-amino-acid chain; its full sequence is 5'-nucleotidase SurE (258 aa).

A divalent metal cation-binding residues include Asp9, Asp10, Ser42, and Asn96.

Belongs to the SurE nucleotidase family. A divalent metal cation is required as a cofactor.

The protein localises to the cytoplasm. The catalysed reaction is a ribonucleoside 5'-phosphate + H2O = a ribonucleoside + phosphate. Its function is as follows. Nucleotidase that shows phosphatase activity on nucleoside 5'-monophosphates. The sequence is that of 5'-nucleotidase SurE from Campylobacter jejuni subsp. jejuni serotype O:23/36 (strain 81-176).